An 87-amino-acid polypeptide reads, in one-letter code: Sec-independent protein translocase protein TatA (87 aa).

The chain crosses the membrane as a helical span at residues 1–21 (MGSFSITHWLILLVVVVVVFG). Residues 56–87 (VLDHDAGTNPPNITGTQSDTTSANKVDDTHNV) are disordered. Positions 64-79 (NPPNITGTQSDTTSAN) are enriched in polar residues.

The protein belongs to the TatA/E family. In terms of assembly, the Tat system comprises two distinct complexes: a TatABC complex, containing multiple copies of TatA, TatB and TatC subunits, and a separate TatA complex, containing only TatA subunits. Substrates initially bind to the TatABC complex, which probably triggers association of the separate TatA complex to form the active translocon.

Its subcellular location is the cell inner membrane. Part of the twin-arginine translocation (Tat) system that transports large folded proteins containing a characteristic twin-arginine motif in their signal peptide across membranes. TatA could form the protein-conducting channel of the Tat system. The polypeptide is Sec-independent protein translocase protein TatA (Psychrobacter arcticus (strain DSM 17307 / VKM B-2377 / 273-4)).